The following is a 121-amino-acid chain: Large ribosomal subunit protein uL14c (121 aa).

The protein belongs to the universal ribosomal protein uL14 family. Part of the 50S ribosomal subunit.

Its subcellular location is the plastid. The protein localises to the chloroplast. Functionally, binds to 23S rRNA. This chain is Large ribosomal subunit protein uL14c, found in Nephroselmis olivacea (Green alga).